Reading from the N-terminus, the 449-residue chain is Anther-specific proline-rich protein APG (449 aa).

Pro residues predominate over residues 1–118; it reads PPKPQPKPPP…KPPAPSPPKP (118 aa). A disordered region spans residues 1-123; sequence PPKPQPKPPP…SPPKPQNKTI (123 aa). The Nucleophile role is filled by S132. Active-site residues include D425 and H428.

This sequence belongs to the 'GDSL' lipolytic enzyme family. As to expression, found in anther, only in male fertile plants.

In Brassica napus (Rape), this protein is Anther-specific proline-rich protein APG (APG).